The sequence spans 443 residues: Oxygen-dependent coproporphyrinogen-III oxidase, mitochondrial (443 aa).

The N-terminal 98 residues, 1–98 (MALRLGQLGS…EMVPKSSGAR (98 aa)), are a transit peptide targeting the mitochondrion. The tract at residues 90 to 111 (MVPKSSGARSPSPGRLEEDGDE) is disordered. Position 101 is a phosphoserine (serine 101). Residues 182 to 191 (VLQDGRVFEK) are important for dimerization. Coproporphyrinogen III is bound at residue serine 233. The Proton donor role is filled by histidine 247. Residue 249-251 (NYR) participates in coproporphyrinogen III binding. The tract at residues 381-417 (YVEFNLVYDRGTKFGLFTPGSRIESILMSLPLTARWE) is important for dimerization. Lysine 393 is subject to N6-acetyllysine; alternate. Position 393 is an N6-succinyllysine; alternate (lysine 393). Residue 400–402 (GSR) participates in coproporphyrinogen III binding.

The protein belongs to the aerobic coproporphyrinogen-III oxidase family. In terms of assembly, homodimer.

The protein resides in the mitochondrion intermembrane space. The catalysed reaction is coproporphyrinogen III + O2 + 2 H(+) = protoporphyrinogen IX + 2 CO2 + 2 H2O. The protein operates within porphyrin-containing compound metabolism; protoporphyrin-IX biosynthesis; protoporphyrinogen-IX from coproporphyrinogen-III (O2 route): step 1/1. In terms of biological role, involved in the heme biosynthesis. Catalyzes the aerobic oxidative decarboxylation of propionate groups of rings A and B of coproporphyrinogen-III to yield the vinyl groups in protoporphyrinogen-IX. The polypeptide is Oxygen-dependent coproporphyrinogen-III oxidase, mitochondrial (Rattus norvegicus (Rat)).